A 711-amino-acid polypeptide reads, in one-letter code: Amino-acid racemase (711 aa).

Over 1-14 the chain is Cytoplasmic; the sequence is MTKNESYSGIDYFR. The chain crosses the membrane as a helical span at residues 15–35; it reads FIAALLIVAIHTSPLFSFSET. Residues 36–37 are Extracellular-facing; the sequence is GN. The chain crosses the membrane as a helical span at residues 38–58; the sequence is FIFTRIVAPVAVPFFFMTSGF. Residues 59–78 lie on the Cytoplasmic side of the membrane; the sequence is FLISRYTCNAEKLGAFIKKT. A helical membrane pass occupies residues 79-99; the sequence is TLIYGVAILLYIPINVYNGYF. Over 100-117 the chain is Extracellular; sequence KMDNLLPNIIKDIVFDGT. A helical membrane pass occupies residues 118–138; it reads LYHLWYLPASIIGAAIAWYLV. Over 139–146 the chain is Cytoplasmic; that stretch reads KKVHYRKA. Residues 147 to 167 form a helical membrane-spanning segment; sequence FLIASILYIIGLFGDSYYGIV. The Extracellular segment spans residues 168-188; sequence KSVSCLNVFYNLIFQLTDYTR. Residues 189–209 form a helical membrane-spanning segment; the sequence is NGIFFAPIFFVLGGYISDSPN. Topologically, residues 210-241 are cytoplasmic; that stretch reads RYRKKNYIRIYSLFCLMFGKTLTLQHFDIQKH. A helical transmembrane segment spans residues 242-262; that stretch reads DSMYVLLLPSVWCLFNLLLHF. Over 263 to 306 the chain is Extracellular; it reads RGKRRTGLRTISLDQLYHSSVYDCCNTIVCAELLHLQSLLVENS. The chain crosses the membrane as a helical span at residues 307 to 327; that stretch reads LVHYIAVCFASVVLAVVITAL. Residues 328–711 lie on the Cytoplasmic side of the membrane; it reads LSSLKPKKAK…EHRLNIIRRA (384 aa). The segment at 336-711 is racemase; that stretch reads AKHTADTDRA…EHRLNIIRRA (376 aa). Lysine 376 functions as the Proton acceptor in the catalytic mechanism. Lysine 376 carries the N6-(pyridoxal phosphate)lysine modification. A substrate-binding site is contributed by arginine 470. Tyrosine 602 acts as the Proton acceptor in catalysis. Methionine 651 is a substrate binding site.

It in the N-terminal section; belongs to the acyltransferase 3 family. In the C-terminal section; belongs to the alanine racemase family. Pyridoxal 5'-phosphate is required as a cofactor.

The protein resides in the cell membrane. This is Amino-acid racemase (vanTG) from Enterococcus faecalis (Streptococcus faecalis).